Reading from the N-terminus, the 221-residue chain is Serine/arginine-rich splicing factor 9 (221 aa).

2 RRM domains span residues 14–89 and 111–187; these read GRIY…FPRT and FRVL…PERS. Lys36 participates in a covalent cross-link: Glycyl lysine isopeptide (Lys-Gly) (interchain with G-Cter in SUMO2). The interval 188–200 is interaction with SAFB1; it reads TSYGYSRSRSGSR. At Ser189 the chain carries Phosphoserine. Positions 189 to 198 are enriched in low complexity; the sequence is SYGYSRSRSG. Residues 189–221 form a disordered region; the sequence is SYGYSRSRSGSRGRDSPYQSRGSPHYFSPFRPY. Tyr192 is subject to Phosphotyrosine. Phosphoserine occurs at positions 193, 195, 204, 208, and 211. Tyr214 carries the phosphotyrosine modification. At Ser216 the chain carries Phosphoserine.

Belongs to the splicing factor SR family. In terms of assembly, interacts with KHDRBS3. Interacts with HABP4. Interacts with NOL3/ARC/NOP30. Interacts with NSEP1/YB-1/YB1. Interacts with SAFB/SAFB1. Interacts with SRSF6/SFRS6. Interacts with TRA2B/SFRS10. Interacts with C1QBP. May also interact with DUSP11/PIR1. Extensively phosphorylated on serine residues in the RS domain. As to expression, expressed at high levels in the heart, kidney, pancreas and placenta, and at lower levels in the brain, liver, lung and skeletal muscle.

The protein localises to the nucleus. Plays a role in constitutive splicing and can modulate the selection of alternative splice sites. Represses the splicing of MAPT/Tau exon 10. This chain is Serine/arginine-rich splicing factor 9 (SRSF9), found in Homo sapiens (Human).